A 216-amino-acid polypeptide reads, in one-letter code: Somatotropin (216 aa).

Residues 1–26 (MAADSQTPWLLTFSLLCLLWPQEAGA) form the signal peptide. His45 is a binding site for Zn(2+). Residues Cys78 and Cys189 are joined by a disulfide bond. Ser131 is modified (phosphoserine). Glu198 lines the Zn(2+) pocket. Cys206 and Cys214 are joined by a disulfide.

This sequence belongs to the somatotropin/prolactin family.

The protein localises to the secreted. In terms of biological role, plays an important role in growth control. Its major role in stimulating body growth is to stimulate the liver and other tissues to secrete IGF1. It stimulates both the differentiation and proliferation of myoblasts. It also stimulates amino acid uptake and protein synthesis in muscle and other tissues. In Rattus norvegicus (Rat), this protein is Somatotropin (Gh1).